The chain runs to 574 residues: Septation ring formation regulator EzrA (574 aa).

At 1–7 (MSSGIIL) the chain is on the extracellular side. The helical transmembrane segment at 8-26 (LIVAIVLLVIIAYLVGVII) threads the bilayer. The Cytoplasmic segment spans residues 27–574 (RKRNDSLITS…YEKTREHIRF (548 aa)). Coiled-coil stretches lie at residues 102 to 141 (NFIR…EEKN), 274 to 350 (ELVT…ETES), and 459 to 520 (QLEA…SFEA).

This sequence belongs to the EzrA family.

The protein resides in the cell membrane. Its function is as follows. Negative regulator of FtsZ ring formation; modulates the frequency and position of FtsZ ring formation. Inhibits FtsZ ring formation at polar sites. Interacts either with FtsZ or with one of its binding partners to promote depolymerization. This chain is Septation ring formation regulator EzrA, found in Streptococcus pyogenes serotype M6 (strain ATCC BAA-946 / MGAS10394).